Consider the following 416-residue polypeptide: Xyloglucan O-acetyltransferase 1 (416 aa).

At Met-1–Lys-14 the chain is on the cytoplasmic side. A helical; Signal-anchor for type II membrane protein membrane pass occupies residues Ile-15–Asn-35. The Lumenal portion of the chain corresponds to Pro-36 to Val-416. Intrachain disulfides connect Cys-79–Cys-129, Cys-100–Cys-165, Cys-109–Cys-395, and Cys-318–Cys-391. Asn-96 is a glycosylation site (N-linked (GlcNAc...) asparagine). Positions Gly-152–Ser-154 match the GDS motif motif. Ser-154 serves as the catalytic Nucleophile. Asn-194, Asn-269, and Asn-319 each carry an N-linked (GlcNAc...) asparagine glycan. The active-site Proton donor is the Asp-390. Residues Asp-390–His-393 carry the DXXH motif motif. The Proton acceptor role is filled by His-393.

The protein belongs to the PC-esterase family. TBL subfamily.

It is found in the golgi apparatus membrane. In terms of biological role, xyloglucan acetyltransferase that catalyzes the acetylation of fucosylated Gal residues on xyloglucan side chains. Predominantly catalyze 6-O-monoacetylation of Gal residues in the Fuc-Gal-Xyl trisaccharide side chains of xyloglucan oligomers. Involved in xyloglucan specific O-acetylation in roots and rosette leaves. The chain is Xyloglucan O-acetyltransferase 1 from Arabidopsis thaliana (Mouse-ear cress).